We begin with the raw amino-acid sequence, 154 residues long: Putative peroxiredoxin MT1643 (154 aa).

Residues 1–153 enclose the Thioredoxin domain; that stretch reads MKTGDTVADF…ALATLRAIRS (153 aa). C44 (cysteine sulfenic acid (-SOH) intermediate) is an active-site residue. Cysteines 44 and 49 form a disulfide.

The protein belongs to the peroxiredoxin family. BCP/PrxQ subfamily. In terms of assembly, monomer.

The catalysed reaction is a hydroperoxide + [thioredoxin]-dithiol = an alcohol + [thioredoxin]-disulfide + H2O. Thiol-specific peroxidase that catalyzes the reduction of hydrogen peroxide and organic hydroperoxides to water and alcohols, respectively. Plays a role in cell protection against oxidative stress by detoxifying peroxides and as sensor of hydrogen peroxide-mediated signaling events. The protein is Putative peroxiredoxin MT1643 (bcpB) of Mycobacterium tuberculosis (strain CDC 1551 / Oshkosh).